An 86-amino-acid chain; its full sequence is Large ribosomal subunit protein bL27 (86 aa).

It belongs to the bacterial ribosomal protein bL27 family.

This Flavobacterium psychrophilum (strain ATCC 49511 / DSM 21280 / CIP 103535 / JIP02/86) protein is Large ribosomal subunit protein bL27.